A 290-amino-acid chain; its full sequence is Transcription factor HES-1 (290 aa).

The disordered stretch occupies residues 1–47; that stretch reads MPADTGMEKPTASPIAGAPASASHTPDKPRSASEHRKSSKPIMEKRR. A compositionally biased stretch (low complexity) spans 10–23; the sequence is PTASPIAGAPASAS. A compositionally biased stretch (basic and acidic residues) spans 25–36; sequence TPDKPRSASEHR. The bHLH domain maps to 35–92; it reads HRKSSKPIMEKRRRARINESLGQLKMLILDALKKDSSRHSKLEKADILEMTVKHLRNL. In terms of domain architecture, Orange spans 111–144; the sequence is YRAGFNECMNEVTRFLSTCEGVNADVRARLLGHL. The WRPW motif signature appears at 287-290; that stretch reads WRPW.

As to quaternary structure, transcription repression requires formation of a complex with a corepressor protein of the Groucho/TLE family.

Its subcellular location is the nucleus. Functionally, transcriptional repressor of genes that require a bHLH protein for their transcription. May act as a negative regulator of myogenesis by inhibiting the functions of MYOD1 and ASH1. This Gallus gallus (Chicken) protein is Transcription factor HES-1 (HES1).